The following is a 345-amino-acid chain: GTP cyclohydrolase-2 (345 aa).

The disordered stretch occupies residues 1-27 (MTIDNYDNSKQDSSKYEVSGTGDGRNG). GTP is bound at residue 143-147 (RIHSE). Zn(2+) contacts are provided by Cys-148, Cys-159, and Cys-161. GTP is bound by residues Gln-164, 197–199 (EGR), and Thr-219. Residue Asp-231 is the Proton acceptor of the active site. Arg-233 acts as the Nucleophile in catalysis. Positions 254 and 259 each coordinate GTP. The disordered stretch occupies residues 312 to 345 (PLKLHTNPQPTETSEAQNQNRMNSALSSTSTLAI). Positions 317–345 (TNPQPTETSEAQNQNRMNSALSSTSTLAI) are enriched in polar residues.

This sequence belongs to the GTP cyclohydrolase II family. Zn(2+) is required as a cofactor.

The enzyme catalyses GTP + 4 H2O = 2,5-diamino-6-hydroxy-4-(5-phosphoribosylamino)-pyrimidine + formate + 2 phosphate + 3 H(+). It functions in the pathway cofactor biosynthesis; riboflavin biosynthesis; 5-amino-6-(D-ribitylamino)uracil from GTP: step 1/4. Functionally, catalyzes the conversion of GTP to 2,5-diamino-6-ribosylamino-4(3H)-pyrimidinone 5'-phosphate (DARP), formate and pyrophosphate. The polypeptide is GTP cyclohydrolase-2 (RIB1) (Saccharomyces cerevisiae (strain ATCC 204508 / S288c) (Baker's yeast)).